Consider the following 434-residue polypeptide: MQVSVEATQGLERRLTISVPAEQIEKLVKDSLQREAKRARIPGFRPGKVPVTVINKRYGAAIRQDITGEVMQRNFIEAIIAEKLNPAGAPTFVPGATDGEKFEFVATFEIYPEVELKGLDAIEVEQPKASVTDADVDSMIETLRKQHATFAAVEREAADGDKVKMNFVGSVDGVEFEGGKADDFELQLGSGRMIPGFEAGILGHKAGEEFVIDVTFPEEYHAENLKGKAAKFAITLTEVLAANLPEVNDEFAALFGISEGGLDALKTEIRKNMNRELEQALKANVKEQVITGLLANNDIELPKALIDGEVNVLRQQAMQRFGGQTANMPELPAELFTEQAARRVKIGLLLGEVIKTNELKAEDERVQALIASMASAYEDPSEVVAYYNSNKELMQNMRNVALEEQAVEALLKSAKVTEKEVAFEEFMNKATGRA.

One can recognise a PPIase FKBP-type domain in the interval 160 to 245 (GDKVKMNFVG…LTEVLAANLP (86 aa)).

The protein belongs to the FKBP-type PPIase family. Tig subfamily.

It localises to the cytoplasm. The catalysed reaction is [protein]-peptidylproline (omega=180) = [protein]-peptidylproline (omega=0). Its function is as follows. Involved in protein export. Acts as a chaperone by maintaining the newly synthesized protein in an open conformation. Functions as a peptidyl-prolyl cis-trans isomerase. The polypeptide is Trigger factor (Shewanella sp. (strain ANA-3)).